Here is a 304-residue protein sequence, read N- to C-terminus: Acetyl-coenzyme A carboxylase carboxyl transferase subunit beta (304 aa).

A CoA carboxyltransferase N-terminal domain is found at 23 to 292; the sequence is VWTKCDSCGQ…PNPEAPREGV (270 aa). Zn(2+) contacts are provided by Cys-27, Cys-30, Cys-46, and Cys-49. The C4-type zinc finger occupies 27-49; it reads CDSCGQVLYRAELERNLEVCPKC. The disordered stretch occupies residues 284–304; the sequence is NPEAPREGVVVPPVPDQEPEA. Pro residues predominate over residues 295-304; the sequence is PPVPDQEPEA.

Belongs to the AccD/PCCB family. Acetyl-CoA carboxylase is a heterohexamer composed of biotin carboxyl carrier protein (AccB), biotin carboxylase (AccC) and two subunits each of ACCase subunit alpha (AccA) and ACCase subunit beta (AccD). Requires Zn(2+) as cofactor.

The protein localises to the cytoplasm. The enzyme catalyses N(6)-carboxybiotinyl-L-lysyl-[protein] + acetyl-CoA = N(6)-biotinyl-L-lysyl-[protein] + malonyl-CoA. Its pathway is lipid metabolism; malonyl-CoA biosynthesis; malonyl-CoA from acetyl-CoA: step 1/1. Functionally, component of the acetyl coenzyme A carboxylase (ACC) complex. Biotin carboxylase (BC) catalyzes the carboxylation of biotin on its carrier protein (BCCP) and then the CO(2) group is transferred by the transcarboxylase to acetyl-CoA to form malonyl-CoA. The chain is Acetyl-coenzyme A carboxylase carboxyl transferase subunit beta from Escherichia coli O6:K15:H31 (strain 536 / UPEC).